Consider the following 445-residue polypeptide: tRNA modification GTPase MnmE (445 aa).

Residues Arg-24, Glu-81, and Lys-121 each contribute to the (6S)-5-formyl-5,6,7,8-tetrahydrofolate site. In terms of domain architecture, TrmE-type G spans 218-369; the sequence is GLTVVIAGPP…LLEALVGFAR (152 aa). Residues 228 to 233, 247 to 253, 272 to 275, and 350 to 352 contribute to the GTP site; these read NAGKST, SPHAGTT, DTAG, and SAR. Mg(2+)-binding residues include Ser-232 and Thr-253. (6S)-5-formyl-5,6,7,8-tetrahydrofolate is bound at residue Lys-445.

This sequence belongs to the TRAFAC class TrmE-Era-EngA-EngB-Septin-like GTPase superfamily. TrmE GTPase family. In terms of assembly, homodimer. Heterotetramer of two MnmE and two MnmG subunits. Requires K(+) as cofactor.

The protein localises to the cytoplasm. Functionally, exhibits a very high intrinsic GTPase hydrolysis rate. Involved in the addition of a carboxymethylaminomethyl (cmnm) group at the wobble position (U34) of certain tRNAs, forming tRNA-cmnm(5)s(2)U34. This Bradyrhizobium sp. (strain BTAi1 / ATCC BAA-1182) protein is tRNA modification GTPase MnmE.